The sequence spans 156 residues: ATP synthase subunit b (156 aa).

A helical transmembrane segment spans residues 11–31 (AIAFILFVWFCMKYVWPPLMA).

The protein belongs to the ATPase B chain family. F-type ATPases have 2 components, F(1) - the catalytic core - and F(0) - the membrane proton channel. F(1) has five subunits: alpha(3), beta(3), gamma(1), delta(1), epsilon(1). F(0) has three main subunits: a(1), b(2) and c(10-14). The alpha and beta chains form an alternating ring which encloses part of the gamma chain. F(1) is attached to F(0) by a central stalk formed by the gamma and epsilon chains, while a peripheral stalk is formed by the delta and b chains.

The protein localises to the cell inner membrane. In terms of biological role, f(1)F(0) ATP synthase produces ATP from ADP in the presence of a proton or sodium gradient. F-type ATPases consist of two structural domains, F(1) containing the extramembraneous catalytic core and F(0) containing the membrane proton channel, linked together by a central stalk and a peripheral stalk. During catalysis, ATP synthesis in the catalytic domain of F(1) is coupled via a rotary mechanism of the central stalk subunits to proton translocation. Its function is as follows. Component of the F(0) channel, it forms part of the peripheral stalk, linking F(1) to F(0). This Enterobacter sp. (strain 638) protein is ATP synthase subunit b.